The sequence spans 267 residues: Cell cycle checkpoint protein RAD1 homolog mrt-2 (267 aa).

Belongs to the Rad1 family. In terms of assembly, probable component of the toroidal 9-1-1 (RAD9-RAD1-HUS1) complex, composed of hpr-9, mrt-2 and hus-1. Interacts with hus-1. Might associate with hpr-9.

It localises to the nucleus. The enzyme catalyses Exonucleolytic cleavage in the 3'- to 5'-direction to yield nucleoside 5'-phosphates.. May be a component of the 9-1-1 cell-cycle checkpoint response complex that plays a major role in DNA repair. Promotes DNA double strand break-induced cell cycle arrest and apoptosis, thereby playing a role in genome stability. Also required for telomere length maintenance and germline immortality. May possess 3'-&gt;5' double stranded DNA exonuclease activity. In Caenorhabditis elegans, this protein is Cell cycle checkpoint protein RAD1 homolog mrt-2.